Reading from the N-terminus, the 199-residue chain is dITP/XTP pyrophosphatase (199 aa).

Thr-9–Lys-14 contributes to the substrate binding site. Mg(2+) contacts are provided by Glu-41 and Asp-70. Asp-70 serves as the catalytic Proton acceptor. Residues Ser-71, Phe-157–Asp-160, Lys-180, and His-185–Arg-186 contribute to the substrate site.

This sequence belongs to the HAM1 NTPase family. As to quaternary structure, homodimer. It depends on Mg(2+) as a cofactor.

The enzyme catalyses XTP + H2O = XMP + diphosphate + H(+). The catalysed reaction is dITP + H2O = dIMP + diphosphate + H(+). It carries out the reaction ITP + H2O = IMP + diphosphate + H(+). Pyrophosphatase that catalyzes the hydrolysis of nucleoside triphosphates to their monophosphate derivatives, with a high preference for the non-canonical purine nucleotides XTP (xanthosine triphosphate), dITP (deoxyinosine triphosphate) and ITP. Seems to function as a house-cleaning enzyme that removes non-canonical purine nucleotides from the nucleotide pool, thus preventing their incorporation into DNA/RNA and avoiding chromosomal lesions. The polypeptide is dITP/XTP pyrophosphatase (Mannheimia succiniciproducens (strain KCTC 0769BP / MBEL55E)).